The chain runs to 92 residues: Small cysteine and glycine repeat-containing protein 9 (92 aa).

Residues 4-72 (CGCGSCGCSG…CCRRTCSSCG (69 aa)) are 11 X 2 AA repeats of CG.

This sequence belongs to the KRTAP type 28 family.

In the hair cortex, hair keratin intermediate filaments are embedded in an interfilamentous matrix, consisting of hair keratin-associated proteins (KRTAP), which are essential for the formation of a rigid and resistant hair shaft through their extensive disulfide bond cross-linking with abundant cysteine residues of hair keratins. The matrix proteins include the high-sulfur and high-glycine-tyrosine keratins. The protein is Small cysteine and glycine repeat-containing protein 9 of Homo sapiens (Human).